The sequence spans 1050 residues: Valine--tRNA ligase (1050 aa).

Residues 37 to 57 are compositionally biased toward basic and acidic residues; the sequence is EKKAAASDKPVKEAKAKKEQT. The interval 37-72 is disordered; it reads EKKAAASDKPVKEAKAKKEQTVEAAEPVDQTPTGQR. A 'HIGH' region motif is present at residues 127 to 137; the sequence is PNVTGNLHVGH. The 'KMSKS' region signature appears at 642-646; sequence KMSKS. Lys-645 contributes to the ATP binding site.

It belongs to the class-I aminoacyl-tRNA synthetase family.

The catalysed reaction is tRNA(Val) + L-valine + ATP = L-valyl-tRNA(Val) + AMP + diphosphate. The protein is Valine--tRNA ligase of Caenorhabditis elegans.